We begin with the raw amino-acid sequence, 354 residues long: Peptide chain release factor 1 (354 aa).

Residue glutamine 230 is modified to N5-methylglutamine.

The protein belongs to the prokaryotic/mitochondrial release factor family. Methylated by PrmC. Methylation increases the termination efficiency of RF1.

It localises to the cytoplasm. Functionally, peptide chain release factor 1 directs the termination of translation in response to the peptide chain termination codons UAG and UAA. The protein is Peptide chain release factor 1 of Thermus thermophilus (strain ATCC BAA-163 / DSM 7039 / HB27).